The primary structure comprises 335 residues: Urokinase plasminogen activator surface receptor (335 aa).

A signal peptide spans 1-22 (MGHPPLLPLLLLLHTCVPASWG). UPAR/Ly6 domains follow at residues 23–114 (LRCM…RSRY), 115–213 (LECI…PQNG), and 214–305 (RQCY…YRSG). Disulfide bonds link Cys-25-Cys-46, Cys-28-Cys-34, and Cys-39-Cys-67. The N-linked (GlcNAc...) asparagine glycan is linked to Asn-74. 11 disulfide bridges follow: Cys-93–Cys-98, Cys-117–Cys-144, Cys-120–Cys-127, Cys-137–Cys-169, Cys-175–Cys-192, Cys-193–Cys-198, Cys-216–Cys-244, Cys-219–Cys-227, Cys-237–Cys-263, Cys-269–Cys-287, and Cys-288–Cys-293. Asn-124 is a glycosylation site (N-linked (GlcNAc...) asparagine). N-linked (GlcNAc...) asparagine glycans are attached at residues Asn-184, Asn-194, Asn-222, and Asn-255. Residue Gly-305 is the site of GPI-anchor amidated glycine attachment. Positions 306–335 (AAPQPGPAHLSLTITLLMTARLWGGTLLWT) are cleaved as a propeptide — removed in mature form.

In terms of assembly, monomer. Interacts (via the UPAR/Ly6 domains) with SRPX2. Interacts with MRC2. Interacts with FAP (seprase); the interaction occurs at the cell surface of invadopodia membrane. Interacts with SORL1 (via N-terminal ectodomain); this interaction decreases PLAUR internalization. The ternary complex composed of PLAUR-PLAU-SERPINE1 also interacts with SORL1. Interacts with CD82; this interaction prevents PLAUR from binding to its high affinity ligand PLAU.

The protein localises to the cell membrane. Its subcellular location is the cell projection. It localises to the invadopodium membrane. In terms of biological role, acts as a receptor for urokinase plasminogen activator. Plays a role in localizing and promoting plasmin formation. Mediates the proteolysis-independent signal transduction activation effects of U-PA. It is subject to negative-feedback regulation by U-PA which cleaves it into an inactive form. This is Urokinase plasminogen activator surface receptor (PLAUR) from Pan troglodytes (Chimpanzee).